A 156-amino-acid chain; its full sequence is Small ribosomal subunit protein uS7 (156 aa).

This sequence belongs to the universal ribosomal protein uS7 family. In terms of assembly, part of the 30S ribosomal subunit. Contacts proteins S9 and S11.

Its function is as follows. One of the primary rRNA binding proteins, it binds directly to 16S rRNA where it nucleates assembly of the head domain of the 30S subunit. Is located at the subunit interface close to the decoding center, probably blocks exit of the E-site tRNA. The protein is Small ribosomal subunit protein uS7 of Mesomycoplasma hyopneumoniae (strain 232) (Mycoplasma hyopneumoniae).